We begin with the raw amino-acid sequence, 93 residues long: Cytochrome c (93 aa).

Over residues 1 to 13 (AALPPGDAAAAQG) the composition is skewed to low complexity. Residues 1-21 (AALPPGDAAAAQGGSNGVGPN) form a disordered region. A heme c-binding site is contributed by Met-70.

This sequence belongs to the cytochrome c family. Post-translationally, binds 1 heme c group covalently per subunit.

The protein resides in the mitochondrion intermembrane space. Electron carrier protein. The oxidized form of the cytochrome c heme group can accept an electron from the heme group of the cytochrome c1 subunit of cytochrome reductase. Cytochrome c then transfers this electron to the cytochrome oxidase complex, the final protein carrier in the mitochondrial electron-transport chain. The chain is Cytochrome c from Trypanosoma brucei brucei.